The following is a 481-amino-acid chain: tRNA:m(4)X modification enzyme TRM13 homolog (481 aa).

Ala-2 carries the N-acetylalanine modification. The segment at 56–83 adopts a CHHC U11-48K-type zinc-finger fold; that stretch reads RILCPLDPKHTVYEDQLAKHLKKCNSRE. Residues Cys-59, His-65, His-75, and Cys-79 each contribute to the Zn(2+) site. The stretch at 113–140 forms a coiled coil; sequence SLSEEQLEKLIKKLRKASEGLNSTLKDH. The tract at residues 381-408 is disordered; it reads ETSNSTTKRQDNQNDDSEEHDDGGYRIT.

Belongs to the methyltransferase TRM13 family.

It catalyses the reaction cytidine(4) in tRNA(Pro) + S-adenosyl-L-methionine = 2'-O-methylcytidine(4) in tRNA(Pro) + S-adenosyl-L-homocysteine + H(+). It carries out the reaction cytidine(4) in tRNA(Gly)(GCC) + S-adenosyl-L-methionine = 2'-O-methylcytidine(4) in tRNA(Gly)(GCC) + S-adenosyl-L-homocysteine + H(+). The catalysed reaction is adenosine(4) in tRNA(His) + S-adenosyl-L-methionine = 2'-O-methyladenosine(4) in tRNA(His) + S-adenosyl-L-homocysteine + H(+). Its function is as follows. tRNA methylase which 2'-O-methylates cytidine(4) in tRNA(Pro) and tRNA(Gly)(GCC), and adenosine(4) in tRNA(His). This chain is tRNA:m(4)X modification enzyme TRM13 homolog (TRMT13), found in Homo sapiens (Human).